A 330-amino-acid chain; its full sequence is Phosphate acyltransferase (330 aa).

It belongs to the PlsX family. Homodimer. Probably interacts with PlsY.

The protein localises to the cytoplasm. The enzyme catalyses a fatty acyl-[ACP] + phosphate = an acyl phosphate + holo-[ACP]. Its pathway is lipid metabolism; phospholipid metabolism. Its function is as follows. Catalyzes the reversible formation of acyl-phosphate (acyl-PO(4)) from acyl-[acyl-carrier-protein] (acyl-ACP). This enzyme utilizes acyl-ACP as fatty acyl donor, but not acyl-CoA. The polypeptide is Phosphate acyltransferase (Bacillus cereus (strain AH820)).